A 218-amino-acid chain; its full sequence is MSQREAGQVDLEAWQPRTRVGRLVKEGKIKSIDEIFRRNLPILETEIVDYLLPGLDHEVIDVSIVQKMTDAGRITRFRAVVVVGNKDGYVGLGKGKARQFRFAIEKAIRNAKLNIIPVRRGCGSWECTCGEAHSVPFTVRGKSGSVEVILKPAPKGTGLVAGDVAKVVLRLAGISDVWTFTKGETRTSYNFARATYLALRNTYRFVTPADWAEARLRL.

One can recognise an S5 DRBM domain in the interval 55–118 (LDHEVIDVSI…RNAKLNIIPV (64 aa)).

The protein belongs to the universal ribosomal protein uS5 family. As to quaternary structure, part of the 30S ribosomal subunit. Contacts protein S4.

Its function is as follows. With S4 and S12 plays an important role in translational accuracy. The protein is Small ribosomal subunit protein uS5 of Aeropyrum pernix (strain ATCC 700893 / DSM 11879 / JCM 9820 / NBRC 100138 / K1).